Reading from the N-terminus, the 338-residue chain is Sorting nexin-15 (338 aa).

One can recognise a PX domain in the interval 1 to 131; sequence MSRRAKKDDF…EFFRGGEVTR (131 aa). Residues R52, S54, R88, and R97 each coordinate a 1,2-diacyl-sn-glycero-3-phospho-(1D-myo-inositol-3-phosphate). An Omega-N-methylarginine modification is found at R106. Positions 134–155 are disordered; that stretch reads EVSRDLQILPPPLIPTPPSDEA. The segment covering 142–151 has biased composition (pro residues); the sequence is LPPPLIPTPP. A phosphoserine mark is found at S202 and S228. The interval 240 to 270 is disordered; sequence VQSKRLDQEPWEPGGREEEEAEDGDPAPAYL. Residues 266–338 form the MIT domain; sequence APAYLGQATE…RAETLHAHLP (73 aa).

Belongs to the sorting nexin family. Homodimer. Interacts with SNX1, SNX2 and SNX4.

The protein resides in the cytoplasm. The protein localises to the membrane. Its subcellular location is the cytoplasmic vesicle membrane. Its function is as follows. May be involved in several stages of intracellular trafficking. Overexpression of SNX15 disrupts the normal trafficking of proteins from the plasma membrane to recycling endosomes or the TGN. This is Sorting nexin-15 (Snx15) from Rattus norvegicus (Rat).